The sequence spans 197 residues: Small ribosomal subunit protein uS4 (197 aa).

Residues 87–147 (LRLDNVLFRL…EKSKSSARYK (61 aa)) form the S4 RNA-binding domain.

It belongs to the universal ribosomal protein uS4 family. Part of the 30S ribosomal subunit. Contacts protein S5. The interaction surface between S4 and S5 is involved in control of translational fidelity.

Its function is as follows. One of the primary rRNA binding proteins, it binds directly to 16S rRNA where it nucleates assembly of the body of the 30S subunit. With S5 and S12 plays an important role in translational accuracy. This chain is Small ribosomal subunit protein uS4, found in Lachnospira eligens (strain ATCC 27750 / DSM 3376 / VPI C15-48 / C15-B4) (Eubacterium eligens).